A 104-amino-acid chain; its full sequence is Protein METHYLENE BLUE SENSITIVITY 2 (104 aa).

Basic residues predominate over residues M1–T11. Disordered regions lie at residues M1–K46 and I64–K104. Basic and acidic residues-rich tracts occupy residues R36–K46 and L73–H82.

It is found in the nucleus. Its subcellular location is the cytoplasm. It localises to the stress granule. Required for acclimation to reactive oxygen species (ROS) responses downstream of beta-cyclocitral, including singlet oxygen 1O(2) detoxification reactions, especially upon light-mediated photooxidative stress, and leading to programmed cell death. Prevents leaf senescence. The protein is Protein METHYLENE BLUE SENSITIVITY 2 of Arabidopsis thaliana (Mouse-ear cress).